Consider the following 172-residue polypeptide: Adenine phosphoribosyltransferase (172 aa).

It belongs to the purine/pyrimidine phosphoribosyltransferase family. In terms of assembly, homodimer.

The protein resides in the cytoplasm. It catalyses the reaction AMP + diphosphate = 5-phospho-alpha-D-ribose 1-diphosphate + adenine. It participates in purine metabolism; AMP biosynthesis via salvage pathway; AMP from adenine: step 1/1. Catalyzes a salvage reaction resulting in the formation of AMP, that is energically less costly than de novo synthesis. The chain is Adenine phosphoribosyltransferase from Latilactobacillus sakei subsp. sakei (strain 23K) (Lactobacillus sakei subsp. sakei).